The following is a 352-amino-acid chain: Ly6/PLAUR domain-containing protein 3 (352 aa).

An N-terminal signal peptide occupies residues Met-1–Ala-32. The UPAR/Ly6 1 domain maps to Cys-35–Pro-128. 4 N-linked (GlcNAc...) asparagine glycosylation sites follow: Asn-120, Asn-131, Asn-178, and Asn-185. The 83-residue stretch at Cys-142–Asn-224 folds into the UPAR/Ly6 2 domain. The segment covering Arg-236 to Pro-249 has biased composition (pro residues). The disordered stretch occupies residues Arg-236–Gly-330. The segment covering Ala-250–Ser-285 has biased composition (low complexity). 2 stretches are compositionally biased toward basic and acidic residues: residues Ser-286–Ser-300 and His-309–Glu-320. Residue Gly-330 is the site of GPI-anchor amidated glycine attachment. A propeptide spans Gly-331–Leu-352 (removed in mature form).

Interacts with AGR2 and AGR3. Binds laminin-1 and laminin-5. Interacts with LGALS3. As to expression, found predominantly on the basal layers of squamous epithelium. Expressed in the gravid uterus and on epithelial of the upper gastrointestinal tract. It has been found in tumor lines which metastasize via the lymphatic system.

The protein localises to the cell membrane. Supports cell migration. May be involved in tumor progression. The polypeptide is Ly6/PLAUR domain-containing protein 3 (Lypd3) (Rattus norvegicus (Rat)).